The primary structure comprises 126 residues: NADH-quinone oxidoreductase subunit A (126 aa).

3 helical membrane passes run isoleucine 11–leucine 31, phenylalanine 64–alanine 84, and glutamate 98–isoleucine 118.

The protein belongs to the complex I subunit 3 family. In terms of assembly, NDH-1 is composed of 14 different subunits. Subunits NuoA, H, J, K, L, M, N constitute the membrane sector of the complex.

It localises to the cell inner membrane. It carries out the reaction a quinone + NADH + 5 H(+)(in) = a quinol + NAD(+) + 4 H(+)(out). NDH-1 shuttles electrons from NADH, via FMN and iron-sulfur (Fe-S) centers, to quinones in the respiratory chain. The immediate electron acceptor for the enzyme in this species is believed to be a menaquinone. Couples the redox reaction to proton translocation (for every two electrons transferred, four hydrogen ions are translocated across the cytoplasmic membrane), and thus conserves the redox energy in a proton gradient. The chain is NADH-quinone oxidoreductase subunit A from Cytophaga hutchinsonii (strain ATCC 33406 / DSM 1761 / CIP 103989 / NBRC 15051 / NCIMB 9469 / D465).